Here is a 208-residue protein sequence, read N- to C-terminus: Large ribosomal subunit protein uL3 (208 aa).

A disordered region spans residues 117 to 149 (GFQGAIKRHGQSRGPMAHGSRYHRRPGSMGPVA).

The protein belongs to the universal ribosomal protein uL3 family. In terms of assembly, part of the 50S ribosomal subunit. Forms a cluster with proteins L14 and L19.

In terms of biological role, one of the primary rRNA binding proteins, it binds directly near the 3'-end of the 23S rRNA, where it nucleates assembly of the 50S subunit. The protein is Large ribosomal subunit protein uL3 of Exiguobacterium sp. (strain ATCC BAA-1283 / AT1b).